A 328-amino-acid chain; its full sequence is 6-phosphogluconolactonase (328 aa).

The protein belongs to the cycloisomerase 2 family.

The catalysed reaction is 6-phospho-D-glucono-1,5-lactone + H2O = 6-phospho-D-gluconate + H(+). Its pathway is carbohydrate degradation; pentose phosphate pathway; D-ribulose 5-phosphate from D-glucose 6-phosphate (oxidative stage): step 2/3. In terms of biological role, catalyzes the hydrolysis of 6-phosphogluconolactone to 6-phosphogluconate. The polypeptide is 6-phosphogluconolactonase (Xenorhabdus nematophila (strain ATCC 19061 / DSM 3370 / CCUG 14189 / LMG 1036 / NCIMB 9965 / AN6)).